Consider the following 345-residue polypeptide: Leucine zipper protein 2 (345 aa).

An N-terminal signal peptide occupies residues 1-19; that stretch reads MKFNAAHYLLPLLPALVLS. Residues 16–211 are a coiled coil; the sequence is LVLSTRQDYE…QMKAMKETVQ (196 aa). An N-linked (GlcNAc...) asparagine glycan is attached at N133. Residues 164–192 are leucine-zipper; sequence LRYGKKDLLFKAQQLTELEQKLAVAKNEL. The segment at 223–345 is disordered; that stretch reads PPLSLMPSNP…GTPAREEKLL (123 aa). Over residues 261 to 277 the composition is skewed to basic and acidic residues; it reads GHHDSSQVQATKEESRR. Residues 298–313 show a composition bias toward polar residues; the sequence is PQSNSTAESELTTQKL. N301 is a glycosylation site (N-linked (GlcNAc...) asparagine).

Expression found only in the brain and spinal cord.

It localises to the secreted. The sequence is that of Leucine zipper protein 2 (Luzp2) from Mus musculus (Mouse).